A 156-amino-acid polypeptide reads, in one-letter code: Large ribosomal subunit protein uL22 (156 aa).

It belongs to the universal ribosomal protein uL22 family. As to quaternary structure, part of the 50S ribosomal subunit.

Functionally, this protein binds specifically to 23S rRNA. It makes multiple contacts with different domains of the 23S rRNA in the assembled 50S subunit and ribosome. In terms of biological role, the globular domain of the protein is located near the polypeptide exit tunnel on the outside of the subunit, while an extended beta-hairpin is found that lines the wall of the exit tunnel in the center of the 70S ribosome. The sequence is that of Large ribosomal subunit protein uL22 from Hyperthermus butylicus (strain DSM 5456 / JCM 9403 / PLM1-5).